The chain runs to 387 residues: Eukaryotic translation initiation factor 3 subunit M (387 aa).

Residues 181–340 (LSSKVMIELL…RKVHISSTMH (160 aa)) enclose the PCI domain.

Belongs to the eIF-3 subunit M family. Component of the eukaryotic translation initiation factor 3 (eIF-3) complex. The eIF-3 complex interacts with pix.

It localises to the cytoplasm. Its subcellular location is the golgi apparatus. In terms of biological role, component of the eukaryotic translation initiation factor 3 (eIF-3) complex, which is involved in protein synthesis of a specialized repertoire of mRNAs and, together with other initiation factors, stimulates binding of mRNA and methionyl-tRNAi to the 40S ribosome. The eIF-3 complex specifically targets and initiates translation of a subset of mRNAs involved in cell proliferation. In Drosophila ananassae (Fruit fly), this protein is Eukaryotic translation initiation factor 3 subunit M.